The sequence spans 188 residues: Mediator of RNA polymerase II transcription subunit 11 (188 aa).

Positions 46 to 72 (KNKMEDNANNFKKLITQVENELSAQMQ) form a coiled coil. Residues 116-188 (DPTSDEPQTT…MTDDDDDMEQ (73 aa)) form a disordered region. Residues 123–141 (QTTEEDEEDGSDDLNEDGA) show a composition bias toward acidic residues. The segment covering 146-155 (SSTVTSSTTD) has biased composition (low complexity). Residues 171-180 (SQEESGRQMT) show a composition bias toward basic and acidic residues.

This sequence belongs to the Mediator complex subunit 11 family. Component of the Mediator complex.

It is found in the nucleus. Functionally, component of the Mediator complex, a coactivator involved in the regulated transcription of nearly all RNA polymerase II-dependent genes. Mediator functions as a bridge to convey information from gene-specific regulatory proteins to the basal RNA polymerase II transcription machinery. Mediator is recruited to promoters by direct interactions with regulatory proteins and serves as a scaffold for the assembly of a functional pre-initiation complex with RNA polymerase II and the general transcription factors. The polypeptide is Mediator of RNA polymerase II transcription subunit 11 (mdt-11) (Caenorhabditis elegans).